A 422-amino-acid chain; its full sequence is Ribosomal RNA small subunit methyltransferase B (422 aa).

Residues 254-260, D277, D303, and D322 each bind S-adenosyl-L-methionine; that span reads CAAPGGK. C375 serves as the catalytic Nucleophile.

The protein belongs to the class I-like SAM-binding methyltransferase superfamily. RsmB/NOP family.

The protein resides in the cytoplasm. The catalysed reaction is cytidine(967) in 16S rRNA + S-adenosyl-L-methionine = 5-methylcytidine(967) in 16S rRNA + S-adenosyl-L-homocysteine + H(+). Its function is as follows. Specifically methylates the cytosine at position 967 (m5C967) of 16S rRNA. This Proteus mirabilis (strain HI4320) protein is Ribosomal RNA small subunit methyltransferase B.